The sequence spans 875 residues: Alanine--tRNA ligase (875 aa).

Histidine 564, histidine 568, cysteine 666, and histidine 670 together coordinate Zn(2+).

It belongs to the class-II aminoacyl-tRNA synthetase family. In terms of assembly, homotetramer. The cofactor is Zn(2+).

The protein localises to the cytoplasm. It carries out the reaction tRNA(Ala) + L-alanine + ATP = L-alanyl-tRNA(Ala) + AMP + diphosphate. Catalyzes the attachment of alanine to tRNA(Ala) in a two-step reaction: alanine is first activated by ATP to form Ala-AMP and then transferred to the acceptor end of tRNA(Ala). Also edits incorrectly charged Ser-tRNA(Ala) and Gly-tRNA(Ala) via its editing domain. The protein is Alanine--tRNA ligase of Yersinia pseudotuberculosis serotype IB (strain PB1/+).